The primary structure comprises 600 residues: MTHVLSAVAWPYANGPRHIGHVAGFGVPSDVFSRYMRMAGHDVLMVSGTDEHGTPILVQAEQEGLTPQQLADRYNRVIAEDLHGLGLSYDLFTRTTTANHYAVVQEMFRTVHRNGYMVARKGMGAISPSTGRTLPDRYVEGTCPICGYDGARGDQCDNCGNQLDAIELKNPRSRINGETPVFVETEHFYLDLPALAEALGSWLQTRADTGRWRPNVLKFSQNLLADMKPRAMTRDIDWGIPVPLEGWEDNPAKRLYVWFDAVIGYLSASVEWARRSGDDDAWKAWWTDPAAESYYFMGKDNITFHSQIWPAELLAYDGRGSAGGQPGPFGNLNLPTEVVASEFLTMEGKQFSSSRGVVIYVRDVLARYQPDALRYFISAAGPENNDSDFTWQEFATRTNSELVAGWGNLVNRTASLIAKNVGEIPAAGELTDADRDLLATTSGGFSTVGGFIEAHRQRAGIGEAMRVVGEVNKYLTEQEPWKIKNSDPERMKSVLHVTAQAVSDCRTLLSPFLPHSAQKVHQAFGGVGTVSPLPELREVTDLDDGRPYPVLTGDYRRGETLPEWASHPVVPGTPVAAPTPVFTKLDVAAVVEEELGRLQR.

Positions 11-21 match the 'HIGH' region motif; it reads PYANGPRHIGH. 4 residues coordinate Zn(2+): C143, C146, C156, and C159. The 'KMSKS' region motif lies at 350–354; the sequence is QFSSS. S353 serves as a coordination point for ATP.

It belongs to the class-I aminoacyl-tRNA synthetase family. MetG type 1 subfamily. Monomer. Zn(2+) is required as a cofactor.

It localises to the cytoplasm. It catalyses the reaction tRNA(Met) + L-methionine + ATP = L-methionyl-tRNA(Met) + AMP + diphosphate. In terms of biological role, is required not only for elongation of protein synthesis but also for the initiation of all mRNA translation through initiator tRNA(fMet) aminoacylation. The polypeptide is Methionine--tRNA ligase (Kineococcus radiotolerans (strain ATCC BAA-149 / DSM 14245 / SRS30216)).